Reading from the N-terminus, the 263-residue chain is Lens fiber major intrinsic protein (263 aa).

Topologically, residues 1 to 9 (MWELRSASF) are cytoplasmic. A helical membrane pass occupies residues 10–29 (WRAIFAEFFATLFYVFFGLG). Residues 30 to 41 (ASLRWAPGPLHV) are Extracellular-facing. A helical membrane pass occupies residues 42-59 (LQVALAFGLALAXLVQTV). Over 60-61 (GH) the chain is Cytoplasmic. Residues 62–77 (ISGAHVNPAVTFXFLV) constitute an intramembrane region (discontinuously helical). The NPA 1 motif lies at 68–70 (NPA). Residues 78–82 (GSQMS) lie on the Cytoplasmic side of the membrane. The helical transmembrane segment at 83–106 (LLRAFCYMAAQLLGAVAGAAVLYS) threads the bilayer. The Extracellular portion of the chain corresponds to 107-127 (VTPPAVRGNLALNTLHAGVSV). Residues 128 to 148 (XQATTVEIFLTLQFVLCIFAT) traverse the membrane as a helical segment. Over 149–156 (YDERRNGR) the chain is Cytoplasmic. A helical membrane pass occupies residues 157–175 (LGSVALAVGFSLTLGHLFG). Topologically, residues 176-178 (MYY) are extracellular. An intramembrane region (discontinuously helical) is located at residues 179 to 193 (TGAGMNPARSFAPAI). The NPA 2 motif lies at 184–186 (NPA). Topologically, residues 194–200 (LTRNFTN) are extracellular. A helical transmembrane segment spans residues 201-222 (HWVYWVGPIIGGGLGSLLYDFL). Over 223–263 (LFPRLKSVSERLSILKGTRPSDNNGQPEGTGEPVELKTQAL) the chain is Cytoplasmic. An interaction with CALM region spans residues 227–237 (LKSVSERLSIL). S235 and S243 each carry phosphoserine. The interval 238-263 (KGTRPSDNNGQPEGTGEPVELKTQAL) is disordered. N245 and N246 each carry deamidated asparagine; by deterioration.

The protein belongs to the MIP/aquaporin (TC 1.A.8) family. As to quaternary structure, homotetramer; each monomer provides an independent water pore. Two homotetramers on opposing membranes can dimerize, forming a cell-cell junction. Interacts with CALM; the calcium-calmodulin/CALM complex interacts with the cytoplasmic domains of two aquaporins, leading to channel closure. Interacts with BFSP1 (via C-terminus); prevents calcium-dependent inhibition of the water channel activity. In terms of processing, subject to partial proteolytic cleavage in the eye lens core. Partial proteolysis promotes interactions between tetramers from adjoining membranes. Fatty acylated at Met-1 and Lys-238. The acyl modifications, in decreasing order of ion abundance, are: oleoyl (C18:1) &gt; palmitoyl (C16:0) &gt; stearoyl (C18:0) &gt; eicosenoyl (C20:1) &gt; dihomo-gamma-linolenoyl (C20:3) &gt; palmitoleoyl (C16:1) &gt; eicosadienoyl (C20:2). In terms of tissue distribution, detected in eye lens (at protein level).

It localises to the cell membrane. The protein resides in the cell junction. The catalysed reaction is H2O(in) = H2O(out). With respect to regulation, the water channel activity is inhibited by calcium through calmodulin/CALM. In terms of biological role, aquaporins form homotetrameric transmembrane channels, with each monomer independently mediating water transport across the plasma membrane along its osmotic gradient. Specifically expressed in lens fiber cells, this aquaporin is crucial for maintaining lens water homeostasis and transparency. Beyond water permeability, it also acts as a cell-to-cell adhesion molecule, forming thin junctions between lens fiber cells that are essential for maintaining the ordered structure and transparency of the lens. The polypeptide is Lens fiber major intrinsic protein (Cavia porcellus (Guinea pig)).